A 310-amino-acid chain; its full sequence is tRNA dimethylallyltransferase (310 aa).

10–17 provides a ligand contact to ATP; it reads GPTAVGKS. 12–17 lines the substrate pocket; the sequence is TAVGKS. The interaction with substrate tRNA stretch occupies residues 35–38; it reads DSMQ.

Belongs to the IPP transferase family. In terms of assembly, monomer. Mg(2+) is required as a cofactor.

The catalysed reaction is adenosine(37) in tRNA + dimethylallyl diphosphate = N(6)-dimethylallyladenosine(37) in tRNA + diphosphate. Functionally, catalyzes the transfer of a dimethylallyl group onto the adenine at position 37 in tRNAs that read codons beginning with uridine, leading to the formation of N6-(dimethylallyl)adenosine (i(6)A). This is tRNA dimethylallyltransferase from Clostridium perfringens (strain 13 / Type A).